A 518-amino-acid chain; its full sequence is Ribonuclease Y (518 aa).

A helical transmembrane segment spans residues G2–V22. Residues T208–L271 enclose the KH domain. One can recognise an HD domain in the interval V334–A427.

Belongs to the RNase Y family.

The protein resides in the cell membrane. Functionally, endoribonuclease that initiates mRNA decay. The protein is Ribonuclease Y of Geobacillus kaustophilus (strain HTA426).